The primary structure comprises 437 residues: Epsilon-sarcoglycan (437 aa).

Topologically, residues Met1–Phe317 are extracellular. N-linked (GlcNAc...) asparagine glycosylation is present at Asn200. A helical membrane pass occupies residues Leu318–Ile338. The Cytoplasmic segment spans residues Met339–Pro437.

It belongs to the sarcoglycan alpha/epsilon family. Post-translationally, N-glycosylated. In terms of processing, ubiquitinated, leading to its degradation by the proteasome. In terms of tissue distribution, in both neural tissues including cerebellar cortex, striatum, cerebral cortex, thalamus and hippocampus, and non-neural tissues including quadriceps muscle, liver, kidney, spleen, lung, testis and heart. Widely distributed in the brain, with a robust signal obtained from regions with dense neuronal packing such as the pyramidal cell layer of the hippocampus, cerebellar molecular layer, and cerebral cortex. Levels are highest in kidney, moderate in brain and lung, and low in skeletal muscle, liver, spleen and testis.

Its subcellular location is the cell membrane. The protein localises to the sarcolemma. It is found in the cytoplasm. It localises to the cytoskeleton. The protein resides in the cell projection. Its subcellular location is the dendrite. The protein localises to the golgi apparatus. Its function is as follows. Component of the sarcoglycan complex, a subcomplex of the dystrophin-glycoprotein complex which forms a link between the F-actin cytoskeleton and the extracellular matrix. The protein is Epsilon-sarcoglycan of Rattus norvegicus (Rat).